Reading from the N-terminus, the 190-residue chain is Adenine phosphoribosyltransferase (190 aa).

This sequence belongs to the purine/pyrimidine phosphoribosyltransferase family. As to quaternary structure, homodimer.

The protein localises to the cytoplasm. It carries out the reaction AMP + diphosphate = 5-phospho-alpha-D-ribose 1-diphosphate + adenine. The protein operates within purine metabolism; AMP biosynthesis via salvage pathway; AMP from adenine: step 1/1. Functionally, catalyzes a salvage reaction resulting in the formation of AMP, that is energically less costly than de novo synthesis. This Cupriavidus taiwanensis (strain DSM 17343 / BCRC 17206 / CCUG 44338 / CIP 107171 / LMG 19424 / R1) (Ralstonia taiwanensis (strain LMG 19424)) protein is Adenine phosphoribosyltransferase.